An 800-amino-acid polypeptide reads, in one-letter code: Phenylalanine--tRNA ligase beta subunit (800 aa).

Residues 38–147 (GAELKGVVAA…PGTVPGTPIG (110 aa)) form the tRNA-binding domain. One can recognise a B5 domain in the interval 401 to 477 (VASPEVRMRW…RTLGYDAIPE (77 aa)). Residues Asp455, Asp461, Glu464, and Glu465 each contribute to the Mg(2+) site. The FDX-ACB domain occupies 708–799 (PRLPAVLRDV…LRERVGAELR (92 aa)).

It belongs to the phenylalanyl-tRNA synthetase beta subunit family. Type 1 subfamily. As to quaternary structure, tetramer of two alpha and two beta subunits. Requires Mg(2+) as cofactor.

It localises to the cytoplasm. The catalysed reaction is tRNA(Phe) + L-phenylalanine + ATP = L-phenylalanyl-tRNA(Phe) + AMP + diphosphate + H(+). This Anaeromyxobacter dehalogenans (strain 2CP-C) protein is Phenylalanine--tRNA ligase beta subunit.